The sequence spans 166 residues: Small ribosomal subunit protein uS5 (166 aa).

Positions 11–74 (LQEKLISVNR…DKARKNMIII (64 aa)) constitute an S5 DRBM domain.

Belongs to the universal ribosomal protein uS5 family. As to quaternary structure, part of the 30S ribosomal subunit. Contacts proteins S4 and S8.

With S4 and S12 plays an important role in translational accuracy. Functionally, located at the back of the 30S subunit body where it stabilizes the conformation of the head with respect to the body. This is Small ribosomal subunit protein uS5 from Wigglesworthia glossinidia brevipalpis.